The chain runs to 385 residues: Transcription termination factor 2, mitochondrial (385 aa).

The transit peptide at 1 to 35 (MSWRLLTGYQLCRLRLFRKPQPALKIRPSSVCVTY) directs the protein to the mitochondrion.

The protein belongs to the mTERF family. In terms of assembly, monomer.

The protein localises to the mitochondrion matrix. Its subcellular location is the mitochondrion nucleoid. In terms of biological role, binds mitochondrial DNA and plays a role in the regulation of transcription of mitochondrial mRNA and rRNA species. The sequence is that of Transcription termination factor 2, mitochondrial (Mterf2) from Rattus norvegicus (Rat).